The following is a 600-amino-acid chain: MPDADTTDDPGDLRTPIVAVLGHVDHGKTSLLDKIRGSAVIEGEAGAITQHIGATAVPLDTVSEVAGSLVDPTEFDLPGLLFIDTPGHHSFSTLRSRGGALADIAILVVDVNDGFQPQTEEAIRILKDTGTPFVVAANKIDTTPGWNPNPDAPVQGTYDDQSDRVRSDLDDALYELIGEMSDAGFSSDLYWRVQNFQKNVGVIPVSAETGEGVPDLLTVLMGLAQRYMKSEMEVTIDGPGAGTVLEVKDEQGFGTTVDVILYDGTIRSGDTVVVGAQPEPIVTDVRALLKPGDLAEMRTEKRFGNVDRMQAAAGLKVAAPDLDDAMAGAPIRVVGDRDVADVVTEVEAELAEVAVETGEEGIVVKADTLGSLEALVSALEEAEIPVMSAEVGDVAPRDVAMATTVDSEKHRVLLGFNVDVLPAAAENAERESVRVFNSDVIYQLVEDYEAFVDAQEREQKEAVFDNIVRPARFRILKDHVFRQNDPAVVGVEVVSGTLKRNTPVGGIEGNDLDRAGIVKGIQDQGEDVDEARAGNRVSVSIDGPTVGRDIKEGDELWVDLPEKHAKVLDQELTSDLPADEREALKSYLDIMRKRDPFWGK.

Residues 13-228 enclose the tr-type G domain; it reads LRTPIVAVLG…VLMGLAQRYM (216 aa). The G1 stretch occupies residues 22–29; that stretch reads GHVDHGKT. Residue 22–29 participates in GTP binding; the sequence is GHVDHGKT. Residues 47 to 51 are G2; sequence AITQH. The interval 84–87 is G3; that stretch reads DTPG. Residues 84 to 88 and 138 to 141 each bind GTP; these read DTPGH and NKID. A G4 region spans residues 138 to 141; the sequence is NKID. The disordered stretch occupies residues 140–162; that stretch reads IDTTPGWNPNPDAPVQGTYDDQS. Positions 206–208 are G5; it reads SAE.

This sequence belongs to the TRAFAC class translation factor GTPase superfamily. Classic translation factor GTPase family. IF-2 subfamily.

Function in general translation initiation by promoting the binding of the formylmethionine-tRNA to ribosomes. Seems to function along with eIF-2. The sequence is that of Probable translation initiation factor IF-2 from Halobacterium salinarum (strain ATCC 700922 / JCM 11081 / NRC-1) (Halobacterium halobium).